The sequence spans 145 residues: MRVVIQRVNHAAVRIDGETVGQIQKGLLLLVGLAEGDGEEQVVKAADKIAKMRIFEDEAGKTNLGIKDVGGQILSVSQFTLLADTKRGNRPSFVHAMRPPKSSQLWEEFNQELVKRGLTVETGEFGADMKVELENDGPFTIVLDL.

The short motif at 137-138 (GP) is the Gly-cisPro motif, important for rejection of L-amino acids element.

Belongs to the DTD family. As to quaternary structure, homodimer.

Its subcellular location is the cytoplasm. It catalyses the reaction glycyl-tRNA(Ala) + H2O = tRNA(Ala) + glycine + H(+). The enzyme catalyses a D-aminoacyl-tRNA + H2O = a tRNA + a D-alpha-amino acid + H(+). Its function is as follows. An aminoacyl-tRNA editing enzyme that deacylates mischarged D-aminoacyl-tRNAs. Also deacylates mischarged glycyl-tRNA(Ala), protecting cells against glycine mischarging by AlaRS. Acts via tRNA-based rather than protein-based catalysis; rejects L-amino acids rather than detecting D-amino acids in the active site. By recycling D-aminoacyl-tRNA to D-amino acids and free tRNA molecules, this enzyme counteracts the toxicity associated with the formation of D-aminoacyl-tRNA entities in vivo and helps enforce protein L-homochirality. The protein is D-aminoacyl-tRNA deacylase of Lactobacillus delbrueckii subsp. bulgaricus (strain ATCC 11842 / DSM 20081 / BCRC 10696 / JCM 1002 / NBRC 13953 / NCIMB 11778 / NCTC 12712 / WDCM 00102 / Lb 14).